Consider the following 682-residue polypeptide: T-box brain protein 1 (682 aa).

2 disordered regions span residues 43–83 (TDNL…RSKL) and 108–127 (SQSS…FPYP). Polar residues predominate over residues 58-68 (GMTNQSDTDNF). Residues 108 to 122 (SQSSQPQSAATAPSA) show a composition bias toward low complexity. The T-box DNA-binding region spans 213 to 393 (LWLKFHRHQT…HNPFAKGFRD (181 aa)). T408 bears the Phosphothreonine mark. S410 bears the Phosphoserine mark. Disordered regions lie at residues 447–483 (PGAG…SPQR) and 588–658 (GLAA…KSEV). Polar residues predominate over residues 462–472 (PHTNGLLSPQQ). A Phosphoserine modification is found at S594. Residues 619–629 (SSIKSIDSSDS) are compositionally biased toward low complexity. Position 641 is a phosphoserine (S641).

Homodimer. Part of a complex containing CASK, TBR1 and TSPYL2; may modulate gene expression in response to neuronal synaptic activity. Interacts with FOXP2. Interacts with FOXP1. Interacts with BCL11A. As to expression, brain.

The protein resides in the nucleus. Functionally, transcriptional repressor involved in multiple aspects of cortical development, including neuronal migration, laminar and areal identity, and axonal projection. As transcriptional repressor of FEZF2, it blocks the formation of the corticospinal (CS) tract from layer 6 projection neurons, thereby restricting the origin of CS axons specifically to layer 5 neurons. This chain is T-box brain protein 1 (TBR1), found in Homo sapiens (Human).